The sequence spans 105 residues: Iron-sulfur cluster assembly protein CyaY (105 aa).

This sequence belongs to the frataxin family.

In terms of biological role, involved in iron-sulfur (Fe-S) cluster assembly. May act as a regulator of Fe-S biogenesis. In Paraburkholderia phymatum (strain DSM 17167 / CIP 108236 / LMG 21445 / STM815) (Burkholderia phymatum), this protein is Iron-sulfur cluster assembly protein CyaY.